The sequence spans 330 residues: Diacylglycerol acyltransferase/mycolyltransferase Ag85A (330 aa).

The first 42 residues, 1–42 (MKFVDRFRGAVAGMLRRLVVEAMGVALLSALIGVVGSAPAEA), serve as a signal peptide directing secretion. 84–85 (LR) contributes to the substrate binding site. The tract at residues 100–110 (FEWYYQSGISV) is fibronectin-binding. A disulfide bridge connects residues C129 and C134. The substrate site is built by S168 and D196. S168 acts as the Nucleophile in catalysis. Residue E272 is part of the active site. Substrate contacts are provided by residues 274 to 277 (LVRT), K281, and 304 to 306 (HSW). H304 is a catalytic residue.

This sequence belongs to the mycobacterial A85 antigen family. Homodimer.

It localises to the secreted. The protein resides in the cell wall. The protein localises to the cytoplasm. It catalyses the reaction an acyl-CoA + a 1,2-diacyl-sn-glycerol = a triacyl-sn-glycerol + CoA. It carries out the reaction 2 alpha,alpha'-trehalose 6-mycolate = alpha,alpha'-trehalose 6,6'-bismycolate + alpha,alpha-trehalose. In terms of biological role, the antigen 85 proteins (FbpA, FbpB, FbpC) are responsible for the high affinity of mycobacteria for fibronectin, a large adhesive glycoprotein, which facilitates the attachment of M.tuberculosis to murine alveolar macrophages (AMs). They also help to maintain the integrity of the cell wall by catalyzing the transfer of mycolic acids to cell wall arabinogalactan, and through the synthesis of alpha,alpha-trehalose dimycolate (TDM, cord factor). They catalyze the transfer of a mycoloyl residue from one molecule of alpha,alpha-trehalose monomycolate (TMM) to another TMM, leading to the formation of TDM. FbpA mediates triacylglycerol (TAG) formation with long-chain acyl-CoA as the acyl donor and 1,2-dipalmitoyl-sn-glycerol (1,2-dipalmitin) as the acyl acceptor. It has a preference for C26:0-CoA over C18:1-CoA. The sequence is that of Diacylglycerol acyltransferase/mycolyltransferase Ag85A (fbpA) from Mycobacterium leprae (strain TN).